The following is a 207-amino-acid chain: Peptidyl-prolyl cis-trans isomerase FKBP16-1, chloroplastic (207 aa).

Residues 104–207 (GDLVELNYVC…VFEIQLLKVL (104 aa)) form the PPIase FKBP-type domain.

The protein belongs to the FKBP-type PPIase family.

The protein localises to the plastid. It is found in the chloroplast thylakoid lumen. It carries out the reaction [protein]-peptidylproline (omega=180) = [protein]-peptidylproline (omega=0). In terms of biological role, PPIases accelerate the folding of proteins. It catalyzes the cis-trans isomerization of proline imidic peptide bonds in oligopeptides. This Arabidopsis thaliana (Mouse-ear cress) protein is Peptidyl-prolyl cis-trans isomerase FKBP16-1, chloroplastic (FKBP16-1).